The following is a 386-amino-acid chain: Heat-inducible transcription repressor HrcA (386 aa).

The protein belongs to the HrcA family.

Negative regulator of class I heat shock genes (grpE-dnaK-dnaJ and groELS operons). Prevents heat-shock induction of these operons. This Chlamydia caviae (strain ATCC VR-813 / DSM 19441 / 03DC25 / GPIC) (Chlamydophila caviae) protein is Heat-inducible transcription repressor HrcA.